We begin with the raw amino-acid sequence, 259 residues long: Dihydroorotate dehydrogenase B (NAD(+)), electron transfer subunit (259 aa).

Residues 2 to 102 (MQKQNMIVVN…LGPLGHGFPV (101 aa)) enclose the FAD-binding FR-type domain. Residues 53-56 (RPIS), 70-72 (LYR), and 77-78 (GT) contribute to the FAD site. [2Fe-2S] cluster is bound by residues cysteine 221, cysteine 226, cysteine 229, and cysteine 246.

This sequence belongs to the PyrK family. In terms of assembly, heterotetramer of 2 PyrK and 2 PyrD type B subunits. Requires [2Fe-2S] cluster as cofactor. FAD is required as a cofactor.

Its pathway is pyrimidine metabolism; UMP biosynthesis via de novo pathway; orotate from (S)-dihydroorotate (NAD(+) route): step 1/1. In terms of biological role, responsible for channeling the electrons from the oxidation of dihydroorotate from the FMN redox center in the PyrD type B subunit to the ultimate electron acceptor NAD(+). The sequence is that of Dihydroorotate dehydrogenase B (NAD(+)), electron transfer subunit from Bacillus cereus (strain ZK / E33L).